A 266-amino-acid chain; its full sequence is tRNA pseudouridine synthase A (266 aa).

Aspartate 57 (nucleophile) is an active-site residue. Tyrosine 115 contributes to the substrate binding site.

Belongs to the tRNA pseudouridine synthase TruA family. In terms of assembly, homodimer.

The catalysed reaction is uridine(38/39/40) in tRNA = pseudouridine(38/39/40) in tRNA. Its function is as follows. Formation of pseudouridine at positions 38, 39 and 40 in the anticodon stem and loop of transfer RNAs. This chain is tRNA pseudouridine synthase A, found in Buchnera aphidicola subsp. Acyrthosiphon pisum (strain Tuc7).